We begin with the raw amino-acid sequence, 338 residues long: Fe(3+)-binding periplasmic protein (338 aa).

The signal sequence occupies residues M1–A26. Positions 40, 88, 224, and 225 each coordinate Fe cation.

It belongs to the bacterial solute-binding protein 1 family. As to quaternary structure, the complex is composed of two ATP-binding proteins (FbpC), two transmembrane proteins (FbpB) and a solute-binding protein (FbpA).

It localises to the periplasm. Its function is as follows. Part of the ABC transporter complex FbpABC (TC 3.A.1.10.1) involved in Fe(3+) ions import. This protein specifically binds Fe(3+) and is involved in its transmembrane transport. The sequence is that of Fe(3+)-binding periplasmic protein (fbpA) from Serratia marcescens.